The primary structure comprises 197 residues: MEFMHNLIPTVIEHTGNYERVFDIYSRLLRERIIFLSGEINDPKADTVIAQLLFLESEDSNKDIYLYLNSPGGSITAGLAIYDTMQYIKPDVRTICIGQAASMGAFLLAAGAKGKRESLTYSRIMIHQPWGGISGQASDINIQANEILRLKKLIIDIMSNQIGVDKEKLALDMERDYFMTSSDALKYGLIDNILVRE.

Ser-102 functions as the Nucleophile in the catalytic mechanism. Residue His-127 is part of the active site.

This sequence belongs to the peptidase S14 family. As to quaternary structure, fourteen ClpP subunits assemble into 2 heptameric rings which stack back to back to give a disk-like structure with a central cavity, resembling the structure of eukaryotic proteasomes.

The protein localises to the cytoplasm. The catalysed reaction is Hydrolysis of proteins to small peptides in the presence of ATP and magnesium. alpha-casein is the usual test substrate. In the absence of ATP, only oligopeptides shorter than five residues are hydrolyzed (such as succinyl-Leu-Tyr-|-NHMec, and Leu-Tyr-Leu-|-Tyr-Trp, in which cleavage of the -Tyr-|-Leu- and -Tyr-|-Trp bonds also occurs).. In terms of biological role, cleaves peptides in various proteins in a process that requires ATP hydrolysis. Has a chymotrypsin-like activity. Plays a major role in the degradation of misfolded proteins. The chain is ATP-dependent Clp protease proteolytic subunit from Borreliella afzelii (strain PKo) (Borrelia afzelii).